Here is a 261-residue protein sequence, read N- to C-terminus: uncharacterized protein (261 aa).

NADP(+) is bound at residue 22-46; that stretch reads IVTGGNSGLGQAFAMALAKAGANIF. Residue Ser-153 participates in substrate binding. Tyr-166 (proton acceptor) is an active-site residue.

It belongs to the short-chain dehydrogenases/reductases (SDR) family.

This is an uncharacterized protein from Escherichia coli (strain K12).